Reading from the N-terminus, the 188-residue chain is Cell division protein SepF (188 aa).

A compositionally biased stretch (polar residues) spans 152–162 (TSHDEASTPTV). The interval 152–188 (TSHDEASTPTVVSRDAEAEQQQEAAAAPSPAWGATAL) is disordered.

This sequence belongs to the SepF family. Homodimer. Interacts with FtsZ.

It is found in the cytoplasm. Cell division protein that is part of the divisome complex and is recruited early to the Z-ring. Probably stimulates Z-ring formation, perhaps through the cross-linking of FtsZ protofilaments. Its function overlaps with FtsA. In Parasynechococcus marenigrum (strain WH8102), this protein is Cell division protein SepF.